The sequence spans 511 residues: Bifunctional purine biosynthesis protein PurH (511 aa).

The MGS-like domain maps to 1-145 (MKKRALVSVS…KNHKFVSVIV (145 aa)).

The protein belongs to the PurH family.

It catalyses the reaction (6R)-10-formyltetrahydrofolate + 5-amino-1-(5-phospho-beta-D-ribosyl)imidazole-4-carboxamide = 5-formamido-1-(5-phospho-D-ribosyl)imidazole-4-carboxamide + (6S)-5,6,7,8-tetrahydrofolate. The enzyme catalyses IMP + H2O = 5-formamido-1-(5-phospho-D-ribosyl)imidazole-4-carboxamide. It functions in the pathway purine metabolism; IMP biosynthesis via de novo pathway; 5-formamido-1-(5-phospho-D-ribosyl)imidazole-4-carboxamide from 5-amino-1-(5-phospho-D-ribosyl)imidazole-4-carboxamide (10-formyl THF route): step 1/1. The protein operates within purine metabolism; IMP biosynthesis via de novo pathway; IMP from 5-formamido-1-(5-phospho-D-ribosyl)imidazole-4-carboxamide: step 1/1. This chain is Bifunctional purine biosynthesis protein PurH, found in Bacillus cereus (strain ATCC 14579 / DSM 31 / CCUG 7414 / JCM 2152 / NBRC 15305 / NCIMB 9373 / NCTC 2599 / NRRL B-3711).